The primary structure comprises 130 residues: Small ribosomal subunit protein uS9 (130 aa).

The protein belongs to the universal ribosomal protein uS9 family.

The chain is Small ribosomal subunit protein uS9 from Methylibium petroleiphilum (strain ATCC BAA-1232 / LMG 22953 / PM1).